The sequence spans 134 residues: Biopolymer transport protein exbD2 (134 aa).

The Cytoplasmic segment spans residues 1-17; sequence MRLGRRTSKQEEAQIDL. A helical transmembrane segment spans residues 18–38; sequence TSMLDIVFIMLIFFIVTSSFV. The Periplasmic segment spans residues 39-134; it reads RESGVEVNRP…KSIALAAEKP (96 aa).

It belongs to the ExbD/TolR family. As to quaternary structure, the accessory proteins ExbB and ExbD seem to form a complex with TonB.

It is found in the cell inner membrane. Involved in the TonB-dependent energy-dependent transport of various receptor-bound substrates. The polypeptide is Biopolymer transport protein exbD2 (exbD2) (Vibrio cholerae serotype O1 (strain ATCC 39315 / El Tor Inaba N16961)).